We begin with the raw amino-acid sequence, 250 residues long: 5'-nucleotidase SurE (250 aa).

Aspartate 8, aspartate 9, serine 39, and asparagine 91 together coordinate a divalent metal cation.

The protein belongs to the SurE nucleotidase family. A divalent metal cation serves as cofactor.

The protein localises to the cytoplasm. The catalysed reaction is a ribonucleoside 5'-phosphate + H2O = a ribonucleoside + phosphate. In terms of biological role, nucleotidase that shows phosphatase activity on nucleoside 5'-monophosphates. The polypeptide is 5'-nucleotidase SurE (Leptospira borgpetersenii serovar Hardjo-bovis (strain JB197)).